A 224-amino-acid polypeptide reads, in one-letter code: Protein-L-isoaspartate O-methyltransferase (224 aa).

Residue Ser70 is part of the active site.

Belongs to the methyltransferase superfamily. L-isoaspartyl/D-aspartyl protein methyltransferase family.

It is found in the cytoplasm. It catalyses the reaction [protein]-L-isoaspartate + S-adenosyl-L-methionine = [protein]-L-isoaspartate alpha-methyl ester + S-adenosyl-L-homocysteine. In terms of biological role, catalyzes the methyl esterification of L-isoaspartyl residues in peptides and proteins that result from spontaneous decomposition of normal L-aspartyl and L-asparaginyl residues. It plays a role in the repair and/or degradation of damaged proteins. The chain is Protein-L-isoaspartate O-methyltransferase from Cellvibrio japonicus (strain Ueda107) (Pseudomonas fluorescens subsp. cellulosa).